A 236-amino-acid polypeptide reads, in one-letter code: Nopaline transport system permease protein NocQ (236 aa).

Residues Ala21–Phe222 enclose the ABC transmembrane type-1 domain. Helical transmembrane passes span Val25–Ala45, Val63–Leu83, Ile102–Ile122, and Gln199–Asn219.

The protein belongs to the binding-protein-dependent transport system permease family. HisMQ subfamily.

The protein resides in the cell inner membrane. Its function is as follows. Component of the nopaline active transport system probably consisting of four subunits: Q, M, P and T. This system is also capable of transporting octopine provided that catabolic functions are induced with nopaline. The sequence is that of Nopaline transport system permease protein NocQ (nocQ) from Agrobacterium fabrum (strain C58 / ATCC 33970) (Agrobacterium tumefaciens (strain C58)).